The sequence spans 117 residues: Large ribosomal subunit protein bL20 (117 aa).

The protein belongs to the bacterial ribosomal protein bL20 family.

Binds directly to 23S ribosomal RNA and is necessary for the in vitro assembly process of the 50S ribosomal subunit. It is not involved in the protein synthesizing functions of that subunit. This Ruminiclostridium cellulolyticum (strain ATCC 35319 / DSM 5812 / JCM 6584 / H10) (Clostridium cellulolyticum) protein is Large ribosomal subunit protein bL20.